The chain runs to 524 residues: Probable malate:quinone oxidoreductase (524 aa).

It belongs to the MQO family. FAD is required as a cofactor.

The enzyme catalyses (S)-malate + a quinone = a quinol + oxaloacetate. It participates in carbohydrate metabolism; tricarboxylic acid cycle; oxaloacetate from (S)-malate (quinone route): step 1/1. The chain is Probable malate:quinone oxidoreductase from Blochmanniella floridana.